A 122-amino-acid chain; its full sequence is Probable non-specific lipid-transfer protein 3 (122 aa).

Residues 1 to 29 (MARLNSKAVAAAVVLAAVVLMMAGREASA) form the signal peptide. 4 disulfides stabilise this stretch: C33–C81, C43–C58, C59–C104, and C79–C118.

The protein belongs to the plant LTP family. In terms of tissue distribution, expressed in phloem. Also detected in the epidermis near the vascular tissues in resistant plants infected by Hessian fly larvae.

Its function is as follows. Plant non-specific lipid-transfer proteins transfer phospholipids as well as galactolipids across membranes. May play a role in wax or cutin deposition in the cell walls of expanding epidermal cells and certain secretory tissues. The polypeptide is Probable non-specific lipid-transfer protein 3 (LTP3) (Triticum aestivum (Wheat)).